The primary structure comprises 408 residues: MSFFDGIPVAPPIEVFHKNKMYLDETAPVKVNLTIGAYRTEEGQPWVLPVVHETEVEIANDTSLNHEYLPVLGHEGFRKAATELVLGAESPAIKEERSFGVQCLSGTGALRAGAEFLASVCNMKTVYVSNPTWGNHKLVFKKAGFTTVADYTFWDYDNKRVHIEKFLSDLESAPEKSVIILHGCAHNPTGMDPTQEQWKLVAEVIKRKNLFTFFDIAYQGFASGDPAADAWAIRYFVDQGMEMVVSQSFAKNFGLYNERVGNLTVVVNNPAVIAGFQSQMSLVIRANWSNPPAHGARIVHKVLTTPARREQWNQSIQAMSSRIKQMRAALLRHLMDLGTPGTWDHIIQQIGMFSYTGLTSAQVDHLIANHKVFLLRDGRINICGLNTKNVEYVAKAIDETVRAVKSNI.

Residues Gly-36, Trp-133, and Asn-187 each contribute to the L-aspartate site. Lys-251 bears the N6-(pyridoxal phosphate)lysine mark. Arg-379 is a binding site for L-aspartate.

The protein belongs to the class-I pyridoxal-phosphate-dependent aminotransferase family. Homodimer. The cofactor is pyridoxal 5'-phosphate. As to expression, expressed in all somatic tissues including the nervous system.

It localises to the cytoplasm. It catalyses the reaction L-aspartate + 2-oxoglutarate = oxaloacetate + L-glutamate. In terms of biological role, biosynthesis of L-glutamate from L-aspartate. Important regulator of levels of glutamate, the major excitatory neurotransmitter of the central nervous system. The protein is Aspartate aminotransferase, cytoplasmic of Caenorhabditis elegans.